The following is a 1413-amino-acid chain: DNA-directed RNA polymerase subunit beta' (1413 aa).

The Zn(2+) site is built by Cys-70, Cys-72, Cys-85, and Cys-88. Mg(2+) is bound by residues Asp-460, Asp-462, and Asp-464. Residues Cys-819, Cys-893, Cys-900, and Cys-903 each coordinate Zn(2+). Residues 1392-1413 form a disordered region; it reads EEAFDFGTPSAPAEEPQHPAAE.

It belongs to the RNA polymerase beta' chain family. In terms of assembly, the RNAP catalytic core consists of 2 alpha, 1 beta, 1 beta' and 1 omega subunit. When a sigma factor is associated with the core the holoenzyme is formed, which can initiate transcription. Mg(2+) is required as a cofactor. It depends on Zn(2+) as a cofactor.

It catalyses the reaction RNA(n) + a ribonucleoside 5'-triphosphate = RNA(n+1) + diphosphate. DNA-dependent RNA polymerase catalyzes the transcription of DNA into RNA using the four ribonucleoside triphosphates as substrates. This chain is DNA-directed RNA polymerase subunit beta', found in Burkholderia cenocepacia (strain ATCC BAA-245 / DSM 16553 / LMG 16656 / NCTC 13227 / J2315 / CF5610) (Burkholderia cepacia (strain J2315)).